The sequence spans 227 residues: PKHD-type hydroxylase Veis_3084 (227 aa).

The disordered stretch occupies residues Asp-27–Glu-51. Residues Ala-33–Pro-47 show a composition bias toward polar residues. The Fe2OG dioxygenase domain occupies Arg-78–Ser-179. Residues His-97, Asp-99, and His-160 each contribute to the Fe cation site. Arg-170 is a binding site for 2-oxoglutarate.

Fe(2+) is required as a cofactor. It depends on L-ascorbate as a cofactor.

The sequence is that of PKHD-type hydroxylase Veis_3084 from Verminephrobacter eiseniae (strain EF01-2).